We begin with the raw amino-acid sequence, 425 residues long: Septin-7 (425 aa).

The Septin-type G domain occupies R28–A297. The interval G38–S45 is G1 motif. Residues G38–S45, T71, G97, K176–E184, G231, and R246 each bind GTP. A G3 motif region spans residues D94 to G97. Residues A175 to D178 are G4 motif. Residues L324–K421 adopt a coiled-coil conformation.

This sequence belongs to the TRAFAC class TrmE-Era-EngA-EngB-Septin-like GTPase superfamily. Septin GTPase family. Monomer, and homodimer. Nucleotide binding promotes oligomerization. Can form heterooligomers with other family members and form filaments.

The protein resides in the cytoplasm. The protein localises to the chromosome. Its subcellular location is the centromere. It is found in the kinetochore. It localises to the cytoskeleton. The protein resides in the spindle. The protein localises to the cleavage furrow. Its subcellular location is the midbody. It is found in the cilium axoneme. In terms of biological role, filament-forming cytoskeletal GTPase. Required for normal organization of the actin cytoskeleton. Required for normal progress through mitosis. Involved in cytokinesis. Plays a role in ciliogenesis and collective cell movements including convergent extension during gastrulation. Controls cell elongation but not polarization during convergent extension. The polypeptide is Septin-7 (Xenopus laevis (African clawed frog)).